Reading from the N-terminus, the 343-residue chain is Ribosomal RNA small subunit methyltransferase C (343 aa).

It belongs to the methyltransferase superfamily. RsmC family. In terms of assembly, monomer.

The protein localises to the cytoplasm. The enzyme catalyses guanosine(1207) in 16S rRNA + S-adenosyl-L-methionine = N(2)-methylguanosine(1207) in 16S rRNA + S-adenosyl-L-homocysteine + H(+). Specifically methylates the guanine in position 1207 of 16S rRNA in the 30S particle. In Shewanella sediminis (strain HAW-EB3), this protein is Ribosomal RNA small subunit methyltransferase C.